A 160-amino-acid polypeptide reads, in one-letter code: MPSFDIVSEIKLEEVRNAVENANRELSTRFDFRGVEASFELKENIVTMSCDSDFQLKQMLDILRGTCVKRGVDTAAFEEKDVQHIGKIYKQAIAFKEGIEQPVAKKLIKMIKDAKIKVQASIQGDQVRVTGKKRDDLQQVMALAKSSDLEQPLQFTNFRD.

Belongs to the YajQ family.

Its function is as follows. Nucleotide-binding protein. The polypeptide is Nucleotide-binding protein Patl_4311 (Pseudoalteromonas atlantica (strain T6c / ATCC BAA-1087)).